The following is a 1462-amino-acid chain: Trifunctional nucleotide phosphoesterase protein YfkN (1462 aa).

The signal sequence occupies residues 1 to 35 (MRIQKRRTHVENILRILLPPIMILSLILPTPPIHA). The interval 36–623 (EESAAPQVHL…GTNLTFESSL (588 aa)) is 2',3'-cyclic nucleotide 2'-phosphodiesterase/3'-nucleotidase. Residues aspartate 52, histidine 54, aspartate 97, asparagine 141, histidine 249, histidine 282, and histidine 284 each contribute to the a divalent metal cation site. A ribonucleoside 3'-phosphate is bound by residues tyrosine 458 and 561-567 (YRASGGG). The interval 624–1427 (LAKPFADKAD…GPAGGLLPDT (804 aa)) is 5'-nucleotidase. A divalent metal cation is bound by residues aspartate 676, histidine 678, aspartate 708, asparagine 740, histidine 872, histidine 895, and histidine 897. A ribonucleoside 5'-phosphate-binding positions include phenylalanine 1047 and 1127 to 1133 (FVGAGGD). The interval 1350-1422 (ILNSGSNNKP…GSGTDGPAGG (73 aa)) is disordered. Over residues 1405-1421 (GSGGNGSGGSGTDGPAG) the composition is skewed to gly residues. An LPXTG sorting signal motif is present at residues 1424–1428 (LPDTA). Threonine 1427 is modified (pentaglycyl murein peptidoglycan amidated threonine). The propeptide at 1428–1462 (ATSMYSILLAGFLISALGTAMYLHQRRKQNRANQA) is removed by sortase.

The protein belongs to the 5'-nucleotidase family. A divalent metal cation is required as a cofactor.

Its subcellular location is the secreted. The protein resides in the cell wall. The enzyme catalyses a nucleoside 2',3'-cyclic phosphate + H2O = a nucleoside 3'-phosphate + H(+). It catalyses the reaction a ribonucleoside 3'-phosphate + H2O = a ribonucleoside + phosphate. The catalysed reaction is a ribonucleoside 5'-phosphate + H2O = a ribonucleoside + phosphate. Functionally, catalyzes the release of inorganic phosphate from 2',3'-cyclic nucleotides through consecutive 2',3'-phosphodiesterase and 3'- (or 2') nucleotidase activities. Also possesses a 5'-nucleotidase activity. Does not catalyze the release of inorganic phosphate from 3',5'-cyclic nucleotides. Probably plays a role in the cellular reprocessing of nucleotides present in the medium, under conditions of phosphate shortage. The sequence is that of Trifunctional nucleotide phosphoesterase protein YfkN (yfkN) from Bacillus subtilis (strain 168).